A 243-amino-acid chain; its full sequence is uncharacterized protein (243 aa).

The segment at 71–120 is disordered; sequence KRTNVSQRNRKKGIKNNRPHKDINSSPDWGNAHRGTDWQSEKANGMNRAK. Residues 78 to 88 are compositionally biased toward basic residues; it reads RNRKKGIKNNR. S96 is subject to Phosphoserine.

This is an uncharacterized protein from Saccharomyces cerevisiae (strain ATCC 204508 / S288c) (Baker's yeast).